We begin with the raw amino-acid sequence, 198 residues long: Pyridoxal 5'-phosphate synthase subunit PdxT (198 aa).

Residue 49 to 51 (GES) coordinates L-glutamine. Residue Cys-81 is the Nucleophile of the active site. L-glutamine is bound by residues Arg-113 and 141-142 (IR). Catalysis depends on charge relay system residues His-177 and Glu-179.

It belongs to the glutaminase PdxT/SNO family. As to quaternary structure, in the presence of PdxS, forms a dodecamer of heterodimers. Only shows activity in the heterodimer.

The enzyme catalyses aldehydo-D-ribose 5-phosphate + D-glyceraldehyde 3-phosphate + L-glutamine = pyridoxal 5'-phosphate + L-glutamate + phosphate + 3 H2O + H(+). It catalyses the reaction L-glutamine + H2O = L-glutamate + NH4(+). It functions in the pathway cofactor biosynthesis; pyridoxal 5'-phosphate biosynthesis. Catalyzes the hydrolysis of glutamine to glutamate and ammonia as part of the biosynthesis of pyridoxal 5'-phosphate. The resulting ammonia molecule is channeled to the active site of PdxS. The protein is Pyridoxal 5'-phosphate synthase subunit PdxT of Mycobacterium ulcerans (strain Agy99).